Reading from the N-terminus, the 393-residue chain is Phosphoglycerate kinase (393 aa).

Substrate contacts are provided by residues 21–23, Arg36, 59–62, Arg113, and Arg146; these read DLN and HLGR. ATP is bound by residues Lys197, Glu319, and 345–348; that span reads GGDT.

The protein belongs to the phosphoglycerate kinase family. As to quaternary structure, monomer.

Its subcellular location is the cytoplasm. It catalyses the reaction (2R)-3-phosphoglycerate + ATP = (2R)-3-phospho-glyceroyl phosphate + ADP. Its pathway is carbohydrate degradation; glycolysis; pyruvate from D-glyceraldehyde 3-phosphate: step 2/5. The polypeptide is Phosphoglycerate kinase (Nitratidesulfovibrio vulgaris (strain DSM 19637 / Miyazaki F) (Desulfovibrio vulgaris)).